We begin with the raw amino-acid sequence, 239 residues long: tRNA (guanine-N(7)-)-methyltransferase (239 aa).

The S-adenosyl-L-methionine site is built by Glu-69, Glu-94, Asp-121, and Asp-144. Asp-144 is an active-site residue. Substrate contacts are provided by residues Lys-148, Asp-180, and 217–220; that span reads TKFE.

It belongs to the class I-like SAM-binding methyltransferase superfamily. TrmB family. Monomer.

It catalyses the reaction guanosine(46) in tRNA + S-adenosyl-L-methionine = N(7)-methylguanosine(46) in tRNA + S-adenosyl-L-homocysteine. It functions in the pathway tRNA modification; N(7)-methylguanine-tRNA biosynthesis. Catalyzes the formation of N(7)-methylguanine at position 46 (m7G46) in tRNA. The chain is tRNA (guanine-N(7)-)-methyltransferase from Buchnera aphidicola subsp. Acyrthosiphon pisum (strain Tuc7).